We begin with the raw amino-acid sequence, 88 residues long: Phage-like element PBSX protein XkdR (88 aa).

This sequence to B.subtilis YqbR.

This Bacillus subtilis (strain 168) protein is Phage-like element PBSX protein XkdR (xkdR).